Consider the following 517-residue polypeptide: Bifunctional purine biosynthesis protein PurH (517 aa).

The MGS-like domain maps to 1–151 (MTQERKIKRA…KNFAHVAVLC (151 aa)).

It belongs to the PurH family.

It catalyses the reaction (6R)-10-formyltetrahydrofolate + 5-amino-1-(5-phospho-beta-D-ribosyl)imidazole-4-carboxamide = 5-formamido-1-(5-phospho-D-ribosyl)imidazole-4-carboxamide + (6S)-5,6,7,8-tetrahydrofolate. The enzyme catalyses IMP + H2O = 5-formamido-1-(5-phospho-D-ribosyl)imidazole-4-carboxamide. It participates in purine metabolism; IMP biosynthesis via de novo pathway; 5-formamido-1-(5-phospho-D-ribosyl)imidazole-4-carboxamide from 5-amino-1-(5-phospho-D-ribosyl)imidazole-4-carboxamide (10-formyl THF route): step 1/1. The protein operates within purine metabolism; IMP biosynthesis via de novo pathway; IMP from 5-formamido-1-(5-phospho-D-ribosyl)imidazole-4-carboxamide: step 1/1. This chain is Bifunctional purine biosynthesis protein PurH, found in Elusimicrobium minutum (strain Pei191).